Reading from the N-terminus, the 630-residue chain is Probable potassium transport system protein Kup (630 aa).

12 consecutive transmembrane segments (helical) span residues 19–39 (GLIG…LYAV), 59–79 (LLSL…VLLI), 108–128 (WIIG…ATIT), 145–165 (PGLK…LFFV), 173–193 (VGGA…ALGL), 220–240 (LLAF…EALY), 255–275 (WLFF…ALVI), 284–304 (PFFF…ATIA), 345–365 (IYVP…VLGF), 374–394 (AYGI…AFVY), 405–425 (TVLV…SNVL), and 427–447 (VFDG…VMTT).

It belongs to the HAK/KUP transporter (TC 2.A.72) family.

Its subcellular location is the cell inner membrane. The enzyme catalyses K(+)(in) + H(+)(in) = K(+)(out) + H(+)(out). In terms of biological role, transport of potassium into the cell. Likely operates as a K(+):H(+) symporter. The protein is Probable potassium transport system protein Kup of Acidiphilium cryptum (strain JF-5).